A 349-amino-acid polypeptide reads, in one-letter code: Anthranilate phosphoribosyltransferase (349 aa).

Residues G82, 85–86, 92–95, 110–118, and S122 contribute to the 5-phospho-alpha-D-ribose 1-diphosphate site; these read GD, NVST, and KHGNRAVSG. G82 contributes to the anthranilate binding site. S94 provides a ligand contact to Mg(2+). N113 provides a ligand contact to anthranilate. R168 contacts anthranilate. D227 and E228 together coordinate Mg(2+).

It belongs to the anthranilate phosphoribosyltransferase family. As to quaternary structure, homodimer. Mg(2+) serves as cofactor.

It carries out the reaction N-(5-phospho-beta-D-ribosyl)anthranilate + diphosphate = 5-phospho-alpha-D-ribose 1-diphosphate + anthranilate. It participates in amino-acid biosynthesis; L-tryptophan biosynthesis; L-tryptophan from chorismate: step 2/5. Functionally, catalyzes the transfer of the phosphoribosyl group of 5-phosphorylribose-1-pyrophosphate (PRPP) to anthranilate to yield N-(5'-phosphoribosyl)-anthranilate (PRA). In Pseudomonas fluorescens (strain ATCC BAA-477 / NRRL B-23932 / Pf-5), this protein is Anthranilate phosphoribosyltransferase.